Reading from the N-terminus, the 380-residue chain is Cytochrome b (380 aa).

The next 4 membrane-spanning stretches (helical) occupy residues 33-53 (FGSL…FLAM), 77-98 (WLIR…YLHI), 113-133 (WTIG…GYVL), and 178-198 (FFAF…IHLL). 2 residues coordinate heme b: His83 and His97. Heme b contacts are provided by His182 and His196. Residue His201 participates in a ubiquinone binding. The next 4 membrane-spanning stretches (helical) occupy residues 226–246 (YKDL…ALFS), 288–308 (LGGV…PFLH), 320–340 (VTQF…WIGG), and 347–367 (FVII…VLIP).

The protein belongs to the cytochrome b family. In terms of assembly, the cytochrome bc1 complex contains 3 respiratory subunits (MT-CYB, CYC1 and UQCRFS1), 2 core proteins (UQCRC1 and UQCRC2) and probably 6 low-molecular weight proteins. Heme b serves as cofactor.

It is found in the mitochondrion inner membrane. Its function is as follows. Component of the ubiquinol-cytochrome c reductase complex (complex III or cytochrome b-c1 complex) that is part of the mitochondrial respiratory chain. The b-c1 complex mediates electron transfer from ubiquinol to cytochrome c. Contributes to the generation of a proton gradient across the mitochondrial membrane that is then used for ATP synthesis. The polypeptide is Cytochrome b (mt-cyb) (Kareius bicoloratus (Stone flounder)).